The following is a 392-amino-acid chain: Succinate--CoA ligase [ADP-forming] subunit beta (392 aa).

Positions 9 to 236 (KELFAAHGVP…PSAADPLEAK (228 aa)) constitute an ATP-grasp domain. ATP contacts are provided by residues lysine 45, 52–54 (GRG), valine 94, and glutamate 99. Mg(2+)-binding residues include asparagine 191 and aspartate 205. Residues asparagine 256 and 318-320 (GIT) each bind substrate.

It belongs to the succinate/malate CoA ligase beta subunit family. In terms of assembly, heterotetramer of two alpha and two beta subunits. Mg(2+) is required as a cofactor.

The catalysed reaction is succinate + ATP + CoA = succinyl-CoA + ADP + phosphate. It catalyses the reaction GTP + succinate + CoA = succinyl-CoA + GDP + phosphate. It functions in the pathway carbohydrate metabolism; tricarboxylic acid cycle; succinate from succinyl-CoA (ligase route): step 1/1. In terms of biological role, succinyl-CoA synthetase functions in the citric acid cycle (TCA), coupling the hydrolysis of succinyl-CoA to the synthesis of either ATP or GTP and thus represents the only step of substrate-level phosphorylation in the TCA. The beta subunit provides nucleotide specificity of the enzyme and binds the substrate succinate, while the binding sites for coenzyme A and phosphate are found in the alpha subunit. The polypeptide is Succinate--CoA ligase [ADP-forming] subunit beta (Acidothermus cellulolyticus (strain ATCC 43068 / DSM 8971 / 11B)).